A 176-amino-acid polypeptide reads, in one-letter code: ATP-dependent protease subunit HslV (176 aa).

Thr2 is a catalytic residue. Na(+) contacts are provided by Gly157, Cys160, and Thr163.

It belongs to the peptidase T1B family. HslV subfamily. As to quaternary structure, a double ring-shaped homohexamer of HslV is capped on each side by a ring-shaped HslU homohexamer. The assembly of the HslU/HslV complex is dependent on binding of ATP.

It localises to the cytoplasm. The enzyme catalyses ATP-dependent cleavage of peptide bonds with broad specificity.. Its activity is regulated as follows. Allosterically activated by HslU binding. Protease subunit of a proteasome-like degradation complex believed to be a general protein degrading machinery. This Pectobacterium atrosepticum (strain SCRI 1043 / ATCC BAA-672) (Erwinia carotovora subsp. atroseptica) protein is ATP-dependent protease subunit HslV.